A 206-amino-acid polypeptide reads, in one-letter code: Large ribosomal subunit protein uL4 (206 aa).

This sequence belongs to the universal ribosomal protein uL4 family. As to quaternary structure, part of the 50S ribosomal subunit.

In terms of biological role, one of the primary rRNA binding proteins, this protein initially binds near the 5'-end of the 23S rRNA. It is important during the early stages of 50S assembly. It makes multiple contacts with different domains of the 23S rRNA in the assembled 50S subunit and ribosome. Functionally, forms part of the polypeptide exit tunnel. The chain is Large ribosomal subunit protein uL4 from Xanthobacter autotrophicus (strain ATCC BAA-1158 / Py2).